The chain runs to 88 residues: Small ribosomal subunit protein bS20 (88 aa).

Residues 1 to 28 are disordered; the sequence is MANIKSQIKRNKTNEKARLRNKAVKSSL.

The protein belongs to the bacterial ribosomal protein bS20 family.

Binds directly to 16S ribosomal RNA. In Streptomyces avermitilis (strain ATCC 31267 / DSM 46492 / JCM 5070 / NBRC 14893 / NCIMB 12804 / NRRL 8165 / MA-4680), this protein is Small ribosomal subunit protein bS20.